The primary structure comprises 132 residues: Large-conductance mechanosensitive channel (132 aa).

A run of 2 helical transmembrane segments spans residues 11–31 (FISRGNALDLAVGVVIGGAFG) and 75–95 (GSFLQAVFDFVIIAFAIFLLV).

It belongs to the MscL family. Homopentamer.

The protein resides in the cell inner membrane. In terms of biological role, channel that opens in response to stretch forces in the membrane lipid bilayer. May participate in the regulation of osmotic pressure changes within the cell. This Synechococcus sp. (strain JA-3-3Ab) (Cyanobacteria bacterium Yellowstone A-Prime) protein is Large-conductance mechanosensitive channel.